The primary structure comprises 336 residues: Tyrosine recombinase XerC (336 aa).

Residues 14–106 (VARCRWLEPF…SVKSFYRFLL (93 aa)) enclose the Core-binding (CB) domain. The region spanning 127-330 (KVPRFVSEEE…TFSRLKEIYD (204 aa)) is the Tyr recombinase domain. Active-site residues include R183, K207, H282, R285, and H308. The active-site O-(3'-phospho-DNA)-tyrosine intermediate is the Y317.

It belongs to the 'phage' integrase family. XerC subfamily. As to quaternary structure, forms a cyclic heterotetrameric complex composed of two molecules of XerC and two molecules of XerD.

The protein resides in the cytoplasm. In terms of biological role, site-specific tyrosine recombinase, which acts by catalyzing the cutting and rejoining of the recombining DNA molecules. The XerC-XerD complex is essential to convert dimers of the bacterial chromosome into monomers to permit their segregation at cell division. It also contributes to the segregational stability of plasmids. The polypeptide is Tyrosine recombinase XerC (Chlorobaculum parvum (strain DSM 263 / NCIMB 8327) (Chlorobium vibrioforme subsp. thiosulfatophilum)).